A 159-amino-acid polypeptide reads, in one-letter code: 2-C-methyl-D-erythritol 2,4-cyclodiphosphate synthase (159 aa).

A divalent metal cation is bound by residues Asp10 and His12. Residues 10 to 12 (DVH) and 36 to 37 (HS) contribute to the 4-CDP-2-C-methyl-D-erythritol 2-phosphate site. His44 provides a ligand contact to a divalent metal cation. 4-CDP-2-C-methyl-D-erythritol 2-phosphate contacts are provided by residues 58–60 (DIG), 134–137 (TTSE), Phe141, and Arg144.

This sequence belongs to the IspF family. Homotrimer. It depends on a divalent metal cation as a cofactor.

It carries out the reaction 4-CDP-2-C-methyl-D-erythritol 2-phosphate = 2-C-methyl-D-erythritol 2,4-cyclic diphosphate + CMP. Its pathway is isoprenoid biosynthesis; isopentenyl diphosphate biosynthesis via DXP pathway; isopentenyl diphosphate from 1-deoxy-D-xylulose 5-phosphate: step 4/6. Functionally, involved in the biosynthesis of isopentenyl diphosphate (IPP) and dimethylallyl diphosphate (DMAPP), two major building blocks of isoprenoid compounds. Catalyzes the conversion of 4-diphosphocytidyl-2-C-methyl-D-erythritol 2-phosphate (CDP-ME2P) to 2-C-methyl-D-erythritol 2,4-cyclodiphosphate (ME-CPP) with a corresponding release of cytidine 5-monophosphate (CMP). This chain is 2-C-methyl-D-erythritol 2,4-cyclodiphosphate synthase, found in Roseobacter denitrificans (strain ATCC 33942 / OCh 114) (Erythrobacter sp. (strain OCh 114)).